A 469-amino-acid polypeptide reads, in one-letter code: MKHAVKHIHFVGIGGAGMSGIAEILHNLGYRVSGSDQSDGATTRRLASLGIRVAIGHDAAHIAGAEAVVTSTAVKGDNPEVIAARSRRVPVVPRAVMLAELMRLKQGIAIAGTHGKTTTTSLVASVLAEAGLDPTFVIGGRLNSAGANSRLGAGDYIVVEADESDASFLNLLPVLSVVTNIDADHMDTYGHDLGRLKHAFLEFLHRMPFYGAAIICGDDPGVRSIIPMISRPVVSYGFGEDAQIRAVDVLALPGGQMRFTAQRRNGVVMPDLPITLNLPGRHNVLNALAVIAVAAELELPDAPVQKALAAFDGVGRRFQRYGELPTPAGGRFTLIDDYGHHPVEMAAVIAAARGAFPGRRLVIAFQPHRYTRTRDCFEDFVKVMGGADAVLLGEVYAAGEAPIVAADGRALARALRVGGKLEPVFVDEIAAMPQAIADNVQDGDVVITMGAGSIGAVPGQVVELLGAHA.

An ATP-binding site is contributed by 112–118; it reads GTHGKTT.

This sequence belongs to the MurCDEF family.

The protein localises to the cytoplasm. It catalyses the reaction UDP-N-acetyl-alpha-D-muramate + L-alanine + ATP = UDP-N-acetyl-alpha-D-muramoyl-L-alanine + ADP + phosphate + H(+). It participates in cell wall biogenesis; peptidoglycan biosynthesis. Functionally, cell wall formation. In Methylibium petroleiphilum (strain ATCC BAA-1232 / LMG 22953 / PM1), this protein is UDP-N-acetylmuramate--L-alanine ligase.